An 882-amino-acid chain; its full sequence is DNA mismatch repair protein MutS (882 aa).

627–634 (GPNMAGKS) contributes to the ATP binding site.

Belongs to the DNA mismatch repair MutS family.

Functionally, this protein is involved in the repair of mismatches in DNA. It is possible that it carries out the mismatch recognition step. This protein has a weak ATPase activity. The sequence is that of DNA mismatch repair protein MutS from Anaeromyxobacter sp. (strain K).